The chain runs to 293 residues: MLHGTEVLKKGFAKMTKGGVIMDVVNAEQAAIAEDSGAVAVMALEKVPADIRASGGVARMADPNKVQEIMDAVSIPVMAKVRIGHFVEAQVLEALGVDMIDESEVLTPADERFHIDKKKFTVPFVCGARNLGEALRRIDEGAAMIRTKGEPGTGNIVEAVRHMRIMMSEIREIQNKEEEELWEVSRKIEAPLELVRETAKLGKLPVVNFAAGGVATPADAALMMQLGADGVFVGSGIFKSDNPEGYARAIVEATAHYDDPEVIAEVSRGLGTAMRGLEISEIPEEGRMQDRGW.

D-ribose 5-phosphate is bound at residue D23. K80 acts as the Schiff-base intermediate with D-ribose 5-phosphate in catalysis. G152 is a D-ribose 5-phosphate binding site. R164 lines the D-glyceraldehyde 3-phosphate pocket. D-ribose 5-phosphate-binding positions include G213 and 234 to 235 (GS).

It belongs to the PdxS/SNZ family. In the presence of PdxT, forms a dodecamer of heterodimers.

The enzyme catalyses aldehydo-D-ribose 5-phosphate + D-glyceraldehyde 3-phosphate + L-glutamine = pyridoxal 5'-phosphate + L-glutamate + phosphate + 3 H2O + H(+). It functions in the pathway cofactor biosynthesis; pyridoxal 5'-phosphate biosynthesis. Its function is as follows. Catalyzes the formation of pyridoxal 5'-phosphate from ribose 5-phosphate (RBP), glyceraldehyde 3-phosphate (G3P) and ammonia. The ammonia is provided by the PdxT subunit. Can also use ribulose 5-phosphate and dihydroxyacetone phosphate as substrates, resulting from enzyme-catalyzed isomerization of RBP and G3P, respectively. The chain is Pyridoxal 5'-phosphate synthase subunit PdxS from Methanothermobacter thermautotrophicus (strain ATCC 29096 / DSM 1053 / JCM 10044 / NBRC 100330 / Delta H) (Methanobacterium thermoautotrophicum).